A 614-amino-acid polypeptide reads, in one-letter code: Probable Xaa-Pro aminopeptidase P (614 aa).

Positions 409, 420, 518, and 532 each coordinate Mn(2+).

Belongs to the peptidase M24B family. The cofactor is Mn(2+).

It carries out the reaction Release of any N-terminal amino acid, including proline, that is linked to proline, even from a dipeptide or tripeptide.. In terms of biological role, catalyzes the removal of a penultimate prolyl residue from the N-termini of peptides. This Aspergillus niger (strain ATCC MYA-4892 / CBS 513.88 / FGSC A1513) protein is Probable Xaa-Pro aminopeptidase P (ampp).